A 330-amino-acid polypeptide reads, in one-letter code: Aspartate--ammonia ligase (330 aa).

This sequence belongs to the class-II aminoacyl-tRNA synthetase family. AsnA subfamily.

It is found in the cytoplasm. The catalysed reaction is L-aspartate + NH4(+) + ATP = L-asparagine + AMP + diphosphate + H(+). It functions in the pathway amino-acid biosynthesis; L-asparagine biosynthesis; L-asparagine from L-aspartate (ammonia route): step 1/1. The sequence is that of Aspartate--ammonia ligase from Salmonella schwarzengrund (strain CVM19633).